A 1163-amino-acid polypeptide reads, in one-letter code: MAQLANIGELLSMLDSSTLGVRDDVTTIFKESLNSERGPMLVNTLVDYYLETNSQPVLHILTTLQEPHDKHLLDKMNEYVGKAATRLSILSLLGHVVRLQPSWKHKLSQAPLLPSLLKCLKMDTDVVVLTTGVLVLITMLPMIPQSGKQHLLDFFDIFGRLSSWCLKKPGHVTEVYLVHLHASVYALFHRLYGMYPCNFVSFLRSHYSMKENVETFEEVVKPMMEHVRIHPELVTGSKDHELDPRRWKTLETHDVVIECAKISLDPTEASYEDGDAVSHQLSACFPHRSADVTTSSYVDTQNSYGGATSTPSSTSRLMLFSTPGQLPQSLSSLSTRPLPEPLQASLWSPSAVCGMTTPPTSPGNVPADLSHPYSKAFGTTTGGKGTPSGTPATSPPPAPPCPQDDCAHGPASQASATPPRKEERADSSRPYLPRQQDVPSDRGLEDLPGSKGSVTLRNLPDFLGDLASEEDSIEKDKEEAAISKELSEITTAEADPVAPRGGFDSPFYRDSLSGSQRKTHSAASGTQGFSVNPEPLHSSLDKHGPDTPKQAFTPIDPPSGSADASPAGDRDRQTSLETSILTPSPCKIPPQRGVSFGSGQLPPYDHLFEVALPKTACHFVSKKTEELLKKAKGNPEEDCVPSTSPMEVLDRLLEQGAGAHSKELSRLSLPSKSVDWTHFGGSPPSDEIRTLRDQLLLLHNQLLYERFKRQQHALRNRRLLRKVIRAAALEEHNAAMKDQLKLQEKDIQMWKVSLQKEQARYSQLQQQRDTMVTQLHSQIRQLQHDREEFYNQSQELQTKLEDCRSMIAELRVELKKANSKVCHTELLLSQVSQKLSNSESVQQQMEFLNRQLLVLGEVNELYLEQLQSKHPDTTKEVEMMKTAYRKELEKNRSHLLQQNQRLDASQRRVLELESLLAKKDHLLLEQKKYLEDVKSQASGQLLAAESRYEAQRKITRVLELEILDLYGRLEKDGRLQKLEEDRAEAAEAAEERLDCCTDGCSDSLLGHNEEAAGHNGETRTSRPGGTRASCGGRVTGGSSSSSSELSTPEKPPNQRFSSRWEPTMGEPSSSIPTTVGSLPSSKSFLGMKTRELFRNKSESQCDEDGMTMSSFSETLKTELGKDSAGMENKTPPSLDAPHPSSPSSDSMGQLHIMDYNETHHEHS.

Lys30 is covalently cross-linked (Glycyl lysine isopeptide (Lys-Gly) (interchain with G-Cter in ubiquitin)). Residues 295 to 316 (SSYVDTQNSYGGATSTPSSTSR) show a composition bias toward polar residues. 2 disordered regions span residues 295-337 (SSYV…STRP) and 353-594 (CGMT…QRGV). The segment covering 321–337 (STPGQLPQSLSSLSTRP) has biased composition (low complexity). A compositionally biased stretch (pro residues) spans 393–402 (TSPPPAPPCP). Residues 403-787 (QDDCAHGPAS…QIRQLQHDRE (385 aa)) form a mediates interaction with WDR45B region. Residues 474 to 487 (EKDKEEAAISKELS) are compositionally biased toward basic and acidic residues. A phosphoserine mark is found at Ser487, Ser505, Ser511, Ser521, Ser595, and Ser598. Polar residues predominate over residues 512-530 (LSGSQRKTHSAASGTQGFS). 2 coiled-coil regions span residues 721 to 919 (RKVI…LAKK) and 970 to 994 (EKDG…ERLD). A compositionally biased stretch (basic and acidic residues) spans 1008 to 1020 (NEEAAGHNGETRT). Residues 1008 to 1163 (NEEAAGHNGE…DYNETHHEHS (156 aa)) are disordered. A compositionally biased stretch (low complexity) spans 1029–1046 (SCGGRVTGGSSSSSSELS). The segment covering 1066 to 1083 (EPSSSIPTTVGSLPSSKS) has biased composition (polar residues). Over residues 1088-1099 (KTRELFRNKSES) the composition is skewed to basic and acidic residues. Ser1097 is modified (phosphoserine). Residues 1131–1146 (PPSLDAPHPSSPSSDS) show a composition bias toward low complexity. Positions 1154-1163 (DYNETHHEHS) are enriched in basic and acidic residues.

As to quaternary structure, component of the TSC-TBC complex (also named Rhebulator complex), composed of 2 molecules of TSC1, 2 molecules of TSC2 and 1 molecule of TBC1D7. Probably forms a complex composed of chaperones HSP90 and HSP70, co-chaperones STIP1/HOP, CDC37, PPP5C, PTGES3/p23, TSC1 and client protein TSC2. Forms a complex composed of chaperones HSP90 and HSP70, co-chaperones CDC37, PPP5C, TSC1 and client protein TSC2, CDK4, AKT, RAF1 and NR3C1; this complex does not contain co-chaperones STIP1/HOP and PTGES3/p23. Forms a complex containing HSP90AA1, TSC1 and TSC2; TSC1 is required to recruit TCS2 to the complex. Interacts (via C-terminus) with the closed form of HSP90AA1 (via the middle domain and TPR repeat-binding motif). Interacts with DOCK7. Interacts with FBXW5. Interacts with WDR45B. Interacts with RPAP3 and URI1. Post-translationally, phosphorylation at Ser-505 does not affect interaction with TSC2. In terms of processing, 'Lys-63'-linked ubiquitinated at Lys-30 by PELI1; the ubiquitination promotes TSC1/TSC2 complex stability. As to expression, highly expressed in brain, spleen and kidney, followed by liver and heart.

The protein localises to the lysosome membrane. It is found in the cytoplasm. The protein resides in the cytosol. Functionally, non-catalytic component of the TSC-TBC complex, a multiprotein complex that acts as a negative regulator of the canonical mTORC1 complex, an evolutionarily conserved central nutrient sensor that stimulates anabolic reactions and macromolecule biosynthesis to promote cellular biomass generation and growth. The TSC-TBC complex acts as a GTPase-activating protein (GAP) for the small GTPase RHEB, a direct activator of the protein kinase activity of mTORC1. In absence of nutrients, the TSC-TBC complex inhibits mTORC1, thereby preventing phosphorylation of ribosomal protein S6 kinase (RPS6KB1 and RPS6KB2) and EIF4EBP1 (4E-BP1) by the mTORC1 signaling. The TSC-TBC complex is inactivated in response to nutrients, relieving inhibition of mTORC1. Within the TSC-TBC complex, TSC1 stabilizes TSC2 and prevents TSC2 self-aggregation. Involved in microtubule-mediated protein transport via its ability to regulate mTORC1 signaling. Also acts as a co-chaperone for HSP90AA1 facilitating HSP90AA1 chaperoning of protein clients such as kinases, TSC2 and glucocorticoid receptor NR3C1. Increases ATP binding to HSP90AA1 and inhibits HSP90AA1 ATPase activity. Competes with the activating co-chaperone AHSA1 for binding to HSP90AA1, thereby providing a reciprocal regulatory mechanism for chaperoning of client proteins. Recruits TSC2 to HSP90AA1 and stabilizes TSC2 by preventing the interaction between TSC2 and ubiquitin ligase HERC1. This Rattus norvegicus (Rat) protein is Hamartin.